The chain runs to 380 residues: Probable tRNA-splicing endonuclease subunit sen2 (380 aa).

Catalysis depends on residues Y281, H289, and K325.

This sequence belongs to the tRNA-intron endonuclease family. As to quaternary structure, heterotetramer composed of sen2, sen15, sen34 and sen54. Interacts directly with sen54.

The enzyme catalyses pretRNA = a 3'-half-tRNA molecule with a 5'-OH end + a 5'-half-tRNA molecule with a 2',3'-cyclic phosphate end + an intron with a 2',3'-cyclic phosphate and a 5'-hydroxyl terminus.. In terms of biological role, constitutes one of the two catalytic subunit of the tRNA-splicing endonuclease complex, a complex responsible for identification and cleavage of the splice sites in pre-tRNA. It cleaves pre-tRNA at the 5'- and 3'-splice sites to release the intron. The products are an intron and two tRNA half-molecules bearing 2',3'-cyclic phosphate and 5'-OH termini. There are no conserved sequences at the splice sites, but the intron is invariably located at the same site in the gene, placing the splice sites an invariant distance from the constant structural features of the tRNA body. This subunit may anchor the endonuclease complex to the nuclear membrane. Probably carries the active site for 5'-splice site cleavage. The sequence is that of Probable tRNA-splicing endonuclease subunit sen2 (sen2) from Schizosaccharomyces pombe (strain 972 / ATCC 24843) (Fission yeast).